The sequence spans 760 residues: 5-methyltetrahydropteroyltriglutamate--homocysteine methyltransferase (760 aa).

5-methyltetrahydropteroyltri-L-glutamate contacts are provided by residues 24 to 27 and K118; that span reads RELK. Residues 437–439 and E490 contribute to the L-homocysteine site; that span reads IGS. Residues 437–439 and E490 contribute to the L-methionine site; that span reads IGS. 5-methyltetrahydropteroyltri-L-glutamate is bound by residues 521 to 522 and W567; that span reads RC. L-homocysteine is bound at residue D605. D605 provides a ligand contact to L-methionine. Residue E611 coordinates 5-methyltetrahydropteroyltri-L-glutamate. Residues H647, C649, and E671 each contribute to the Zn(2+) site. Residue H700 is the Proton donor of the active site. Residue C732 participates in Zn(2+) binding.

It belongs to the vitamin-B12 independent methionine synthase family. Zn(2+) serves as cofactor.

It carries out the reaction 5-methyltetrahydropteroyltri-L-glutamate + L-homocysteine = tetrahydropteroyltri-L-glutamate + L-methionine. It participates in amino-acid biosynthesis; L-methionine biosynthesis via de novo pathway; L-methionine from L-homocysteine (MetE route): step 1/1. Functionally, catalyzes the transfer of a methyl group from 5-methyltetrahydrofolate to homocysteine resulting in methionine formation. This is 5-methyltetrahydropteroyltriglutamate--homocysteine methyltransferase from Mycobacterium leprae (strain TN).